An 87-amino-acid polypeptide reads, in one-letter code: MAEQQKTRVTVDIYGQQYTIVGTESSSHIRLVASIVDDKMREISEKNPTLDISKLAVLTAINIVHDYIKLKEEYDRLLQKLHKEKDE.

Residues 64–87 are a coiled coil; it reads VHDYIKLKEEYDRLLQKLHKEKDE.

The protein belongs to the ZapA family. Type 2 subfamily. Homodimer. Interacts with FtsZ.

It localises to the cytoplasm. Activator of cell division through the inhibition of FtsZ GTPase activity, therefore promoting FtsZ assembly into bundles of protofilaments necessary for the formation of the division Z ring. It is recruited early at mid-cell but it is not essential for cell division. The polypeptide is Cell division protein ZapA (Geobacillus sp. (strain WCH70)).